Here is a 324-residue protein sequence, read N- to C-terminus: tRNA U34 carboxymethyltransferase (324 aa).

Carboxy-S-adenosyl-L-methionine contacts are provided by residues lysine 91, tryptophan 105, lysine 110, glycine 130, 152 to 154 (DPS), 181 to 182 (IE), methionine 196, tyrosine 200, and arginine 315.

Belongs to the class I-like SAM-binding methyltransferase superfamily. CmoB family. Homotetramer.

The catalysed reaction is carboxy-S-adenosyl-L-methionine + 5-hydroxyuridine(34) in tRNA = 5-carboxymethoxyuridine(34) in tRNA + S-adenosyl-L-homocysteine + H(+). Catalyzes carboxymethyl transfer from carboxy-S-adenosyl-L-methionine (Cx-SAM) to 5-hydroxyuridine (ho5U) to form 5-carboxymethoxyuridine (cmo5U) at position 34 in tRNAs. The sequence is that of tRNA U34 carboxymethyltransferase from Aliivibrio fischeri (strain MJ11) (Vibrio fischeri).